A 498-amino-acid chain; its full sequence is Putative antiporter subunit mnhD2 (498 aa).

14 helical membrane passes run 2-22 (LSNLLILPMLLPFLCALILVF), 32-52 (YLYLGTMTITTIISLMLLIYV), 78-98 (LSLIMVTTASFVITLIMAYGF), 108-128 (YHLPSFILFLSVGVIGSFLTS), 130-150 (LFNLYVMFEIMLLASFVLITL), 161-181 (IIYVVLNIIGSWLFLLGIGLL), 209-229 (ISLIFLVAFSAKAALVLFMWL), 240-260 (LAALFAALMTKVGAYALIRFF), 271-291 (IHPLLATMAAITMVIGAIGVI), 308-328 (IGFIILGLGTNTFAGINGAIF), 330-350 (LVNDIVVKTLLFFIIGSLVYI), 369-389 (FGVAFIIMIFAIGGVPPFSGF), 406-426 (IGLALMIITSLIAMYSLFRIF), and 451-471 (ILSILVVVVIAIGIAAPVVLN).

The protein belongs to the CPA3 antiporters (TC 2.A.63) subunit D family. As to quaternary structure, may form a heterooligomeric complex that consists of seven subunits: mnhA2, mnhB2, mnhC2, mnhD2, mnhE2, mnhF2 and mnhG2.

Its subcellular location is the cell membrane. This is Putative antiporter subunit mnhD2 (mnhD2) from Staphylococcus aureus (strain Mu3 / ATCC 700698).